Reading from the N-terminus, the 257-residue chain is MTDLNTPESTSKPVWEHFDHVEPGIRRRIAVADPEIKEYLDGMLARIASHRGVEHPFLNAYRTTALDPEQERHLFSECYYFFRYLPFYITGMAVKTRDEMILREIILNVADEVGSDPTHSTLFADFLARIGIDKEHLDGYQPLEVTRQLNDGIRHLYTETSINKALGALYADETMSSIMVSKINDGLRNQGYDDDLRHFWQLHIDVEVGHSNSVFNAIAPYVGSKAARAEFEEGVFEFLGLVERYWDGVRELVGIGK.

Residues glutamate 112, histidine 119, glutamate 173, histidine 203, glutamate 207, and histidine 210 each coordinate Fe cation.

Fe(2+) is required as a cofactor.

It catalyses the reaction 4-chloro-L-lysine + AH2 + O2 = L-2-amino-4-chloropent-4-enoate + formaldehyde + A + NH4(+) + H2O. It participates in amino-acid metabolism. It functions in the pathway antibiotic biosynthesis. Functionally, involved in the biosynthesis of terminal alkyne-containing amino acids such as L-propargylglycine (Pra) and L-beta-ethynylserine, that are produced as antibiotics by S.cattleya. Catalyzes an oxidative C-C bond cleavage in 4-chloro-L-lysine to form 4-chloro-allyl-L-glycine (also named L-2-amino-4-chloropent-4-enoate), with release of formaldehyde and ammonia. Is also able to react with L-lysine directly to produce allylglycine in vitro. This Streptantibioticus cattleyicolor (strain ATCC 35852 / DSM 46488 / JCM 4925 / NBRC 14057 / NRRL 8057) (Streptomyces cattleya) protein is 4-chloro-allylglycine synthase.